The following is a 306-amino-acid chain: L-lactate dehydrogenase (306 aa).

Residues Val11, Asp32, Lys37, and 76–77 (GA) each bind NAD(+). Positions 79 and 85 each coordinate substrate. Residues Ser98, 115–117 (VSN), and Ser140 contribute to the NAD(+) site. 117-120 (NPVD) provides a ligand contact to substrate. Residue 145–148 (DTAR) participates in substrate binding. Beta-D-fructose 1,6-bisphosphate-binding residues include Arg150 and His165. The Proton acceptor role is filled by His172. Tyr214 is subject to Phosphotyrosine. Thr223 is a substrate binding site.

It belongs to the LDH/MDH superfamily. LDH family. Homotetramer.

The protein resides in the cytoplasm. The catalysed reaction is (S)-lactate + NAD(+) = pyruvate + NADH + H(+). It participates in fermentation; pyruvate fermentation to lactate; (S)-lactate from pyruvate: step 1/1. Allosterically activated by fructose 1,6-bisphosphate (FBP). Its function is as follows. Catalyzes the conversion of lactate to pyruvate. This is L-lactate dehydrogenase from Synechococcus sp. (strain JA-3-3Ab) (Cyanobacteria bacterium Yellowstone A-Prime).